The following is a 635-amino-acid chain: Chaperone protein DnaK (635 aa).

Position 200 is a phosphothreonine; by autocatalysis (Thr-200). Residues 595–635 form a disordered region; it reads KAQPLTEKVQAKSSAENTSKEKSKADDDVVDADFEEVKDDK. The segment covering 612 to 621 has biased composition (basic and acidic residues); it reads TSKEKSKADD. The span at 622 to 635 shows a compositional bias: acidic residues; that stretch reads DVVDADFEEVKDDK.

Belongs to the heat shock protein 70 family.

Acts as a chaperone. In Ruthia magnifica subsp. Calyptogena magnifica, this protein is Chaperone protein DnaK.